Consider the following 1478-residue polypeptide: GTPase-activating protein and VPS9 domain-containing protein 1 (1478 aa).

In terms of domain architecture, Ras-GAP spans 147–385 (SYLLQVLRYL…AAFLDVVIGG (239 aa)). A Phosphoserine modification is found at Ser-227. Thr-390 and Thr-458 each carry phosphothreonine. At Tyr-460 the chain carries Phosphotyrosine. The residue at position 466 (Ser-466) is a Phosphoserine. A Phosphothreonine modification is found at Thr-470. Phosphoserine occurs at positions 566 and 569. Disordered stretches follow at residues 574–608 (GISEGPSNRSNSVSSLDLEGESVSELGAGPSGSNG), 739–820 (ESCS…PPSQ), and 846–874 (HYARPSHPPPDPPILEGAVGGNEARLPNF). A compositionally biased stretch (polar residues) spans 578–588 (GPSNRSNSVSS). Phosphoserine occurs at positions 742, 746, and 757. The segment covering 758 to 777 (SRPSTPGLSVVSGISATSED) has biased composition (polar residues). Thr-762 carries the post-translational modification Phosphothreonine. Position 766 is a phosphoserine (Ser-766). A compositionally biased stretch (basic and acidic residues) spans 778-789 (IPNKIEDLRSEC). 6 positions are modified to phosphoserine: Ser-876, Ser-902, Ser-903, Ser-908, Ser-914, and Ser-966. A compositionally biased stretch (basic and acidic residues) spans 889 to 902 (QRHSYPERLVRSRS). 2 disordered regions span residues 889–1023 (QRHS…PRLS) and 1043–1064 (TSPSDGAMANYESTGDNHDRDL). 2 stretches are compositionally biased toward basic and acidic residues: residues 954 to 975 (DSSRGETEERKDSDDEKSDRNR) and 997 to 1008 (EKQEKDKDDLGP). A compositionally biased stretch (polar residues) spans 1012–1023 (STLTDDPSPRLS). Phosphoserine occurs at positions 1019, 1046, 1096, and 1103. The region spanning 1338-1478 (ILRDQVLHEH…EFIKTIDDRK (141 aa)) is the VPS9 domain.

This sequence belongs to the GAPVD1 family. Interacts with TRIP10/CIP4. Interacts with RAB5A. As to quaternary structure, (Microbial infection) Interacts with P.falciparum (strain 3D7) CK1. In terms of tissue distribution, expressed in erythrocytes (at protein level).

It localises to the membrane. The protein localises to the endosome. In terms of biological role, acts both as a GTPase-activating protein (GAP) and a guanine nucleotide exchange factor (GEF), and participates in various processes such as endocytosis, insulin receptor internalization or LC2A4/GLUT4 trafficking. Acts as a GEF for the Ras-related protein RAB31 by exchanging bound GDP for free GTP, leading to regulate LC2A4/GLUT4 trafficking. In the absence of insulin, it maintains RAB31 in an active state and promotes a futile cycle between LC2A4/GLUT4 storage vesicles and early endosomes, retaining LC2A4/GLUT4 inside the cells. Upon insulin stimulation, it is translocated to the plasma membrane, releasing LC2A4/GLUT4 from intracellular storage vesicles. Also involved in EGFR trafficking and degradation, possibly by promoting EGFR ubiquitination and subsequent degradation by the proteasome. Has GEF activity for Rab5 and GAP activity for Ras. The chain is GTPase-activating protein and VPS9 domain-containing protein 1 (GAPVD1) from Homo sapiens (Human).